Reading from the N-terminus, the 311-residue chain is Glutamyl-Q tRNA(Asp) synthetase (311 aa).

Residues 14–18 (RYAPS) and Glu50 contribute to the L-glutamate site. Positions 17 to 27 (PSPSGDLHLGN) match the 'HIGH' region motif. 4 residues coordinate Zn(2+): Cys104, Cys106, Tyr125, and Cys129. Residues Tyr186 and Arg204 each contribute to the L-glutamate site. The 'KMSKS' region signature appears at 242–246 (RLAKR). Lys245 provides a ligand contact to ATP.

This sequence belongs to the class-I aminoacyl-tRNA synthetase family. GluQ subfamily. It depends on Zn(2+) as a cofactor.

In terms of biological role, catalyzes the tRNA-independent activation of glutamate in presence of ATP and the subsequent transfer of glutamate onto a tRNA(Asp). Glutamate is transferred on the 2-amino-5-(4,5-dihydroxy-2-cyclopenten-1-yl) moiety of the queuosine in the wobble position of the QUC anticodon. The polypeptide is Glutamyl-Q tRNA(Asp) synthetase (Nocardia farcinica (strain IFM 10152)).